Consider the following 232-residue polypeptide: Cytidylate kinase (232 aa).

15–23 (GPAGAGKST) is a binding site for ATP. Positions 164–192 (KEDPPPISQGQLAAEMKERDMRDSTRADA) are disordered. Basic and acidic residues predominate over residues 178–189 (EMKERDMRDSTR).

This sequence belongs to the cytidylate kinase family. Type 1 subfamily.

The protein localises to the cytoplasm. The catalysed reaction is CMP + ATP = CDP + ADP. The enzyme catalyses dCMP + ATP = dCDP + ADP. The chain is Cytidylate kinase from Solibacter usitatus (strain Ellin6076).